The following is a 643-amino-acid chain: Probable potassium transport system protein Kup (643 aa).

Basic and acidic residues predominate over residues 1-12 (MSISSKTEDSDI). A disordered region spans residues 1–20 (MSISSKTEDSDIRSSVMTDH). Transmembrane regions (helical) follow at residues 28–48 (LAGL…TSPL), 65–85 (AGNV…IVGL), 121–141 (WLLV…GMIT), 158–178 (PAFH…LFLF), 187–207 (GALF…LGII), 224–244 (GISF…AVFL), 268–288 (WFLL…ALLL), 301–321 (LVPS…TIIA), 358–378 (IYVP…VAWF), 384–404 (LAAA…ILFY), 415–435 (PAAL…FFGA), and 440–460 (LFHG…IMNT).

It belongs to the HAK/KUP transporter (TC 2.A.72) family.

Its subcellular location is the cell inner membrane. The enzyme catalyses K(+)(in) + H(+)(in) = K(+)(out) + H(+)(out). Functionally, transport of potassium into the cell. Likely operates as a K(+):H(+) symporter. In Chlorobium luteolum (strain DSM 273 / BCRC 81028 / 2530) (Pelodictyon luteolum), this protein is Probable potassium transport system protein Kup.